The sequence spans 425 residues: 2-methylserine hydroxymethyltransferase (425 aa).

(6S)-5,6,7,8-tetrahydrofolate is bound by residues Leu-126 and 130-132; that span reads GHL. An N6-(pyridoxal phosphate)lysine modification is found at Lys-235.

It belongs to the SHMT family. Homodimer. It depends on pyridoxal 5'-phosphate as a cofactor.

The protein resides in the cytoplasm. The enzyme catalyses (6R)-5,10-methylene-5,6,7,8-tetrahydrofolate + D-alanine + H2O = 2-methylserine + (6S)-5,6,7,8-tetrahydrofolate. The protein operates within one-carbon metabolism; tetrahydrofolate interconversion. Functionally, catalyzes the reversible interconversion of alpha-methyl-L-serine to D-alanine with tetrahydrofolate (THF) serving as the one-carbon carrier. Cannot use alpha-methyl-D-serine, L-serine, D-serine or L-alanine. This is 2-methylserine hydroxymethyltransferase from Aminobacter sp.